Consider the following 250-residue polypeptide: Probable aquaporin TIP1-1 (250 aa).

2 helical membrane-spanning segments follow: residues 25-44 (AEFI…GMAF) and 58-77 (LIAA…SVGA). The short motif at 85–87 (NPA) is the NPA 1 element. 3 helical membrane passes run 103-121 (GLLY…CFLL), 144-163 (LVLE…ATAV), and 170-192 (LGTI…GGAF). Positions 198-200 (NPA) match the NPA 2 motif. The chain crosses the membrane as a helical span at residues 216-233 (WVYWVGPLIGGGLAGVIY).

This sequence belongs to the MIP/aquaporin (TC 1.A.8) family. TIP (TC 1.A.8.10) subfamily. Expressed in roots and leaves.

It is found in the vacuole membrane. Aquaporins facilitate the transport of water and small neutral solutes across cell membranes. May be involved in transport from the vacuolar compartment to the cytoplasm. This is Probable aquaporin TIP1-1 (TIP1-1) from Oryza sativa subsp. japonica (Rice).